The following is a 320-amino-acid chain: 4-hydroxy-3-methylbut-2-enyl diphosphate reductase (320 aa).

Cysteine 12 is a binding site for [4Fe-4S] cluster. 2 residues coordinate (2E)-4-hydroxy-3-methylbut-2-enyl diphosphate: histidine 41 and histidine 74. The dimethylallyl diphosphate site is built by histidine 41 and histidine 74. 2 residues coordinate isopentenyl diphosphate: histidine 41 and histidine 74. [4Fe-4S] cluster is bound at residue cysteine 96. Residue histidine 124 participates in (2E)-4-hydroxy-3-methylbut-2-enyl diphosphate binding. Histidine 124 lines the dimethylallyl diphosphate pocket. Histidine 124 is an isopentenyl diphosphate binding site. Glutamate 126 functions as the Proton donor in the catalytic mechanism. Residue threonine 167 participates in (2E)-4-hydroxy-3-methylbut-2-enyl diphosphate binding. A [4Fe-4S] cluster-binding site is contributed by cysteine 197. Positions 225, 226, 227, and 269 each coordinate (2E)-4-hydroxy-3-methylbut-2-enyl diphosphate. Residues serine 225, serine 226, asparagine 227, and serine 269 each coordinate dimethylallyl diphosphate. 4 residues coordinate isopentenyl diphosphate: serine 225, serine 226, asparagine 227, and serine 269.

It belongs to the IspH family. [4Fe-4S] cluster is required as a cofactor.

The enzyme catalyses isopentenyl diphosphate + 2 oxidized [2Fe-2S]-[ferredoxin] + H2O = (2E)-4-hydroxy-3-methylbut-2-enyl diphosphate + 2 reduced [2Fe-2S]-[ferredoxin] + 2 H(+). It catalyses the reaction dimethylallyl diphosphate + 2 oxidized [2Fe-2S]-[ferredoxin] + H2O = (2E)-4-hydroxy-3-methylbut-2-enyl diphosphate + 2 reduced [2Fe-2S]-[ferredoxin] + 2 H(+). It participates in isoprenoid biosynthesis; dimethylallyl diphosphate biosynthesis; dimethylallyl diphosphate from (2E)-4-hydroxy-3-methylbutenyl diphosphate: step 1/1. It functions in the pathway isoprenoid biosynthesis; isopentenyl diphosphate biosynthesis via DXP pathway; isopentenyl diphosphate from 1-deoxy-D-xylulose 5-phosphate: step 6/6. Catalyzes the conversion of 1-hydroxy-2-methyl-2-(E)-butenyl 4-diphosphate (HMBPP) into a mixture of isopentenyl diphosphate (IPP) and dimethylallyl diphosphate (DMAPP). Acts in the terminal step of the DOXP/MEP pathway for isoprenoid precursor biosynthesis. The chain is 4-hydroxy-3-methylbut-2-enyl diphosphate reductase from Francisella tularensis subsp. novicida (strain U112).